The chain runs to 542 residues: Propane 2-monooxygenase, hydroxylase component large subunit (542 aa).

Fe cation is bound by residues glutamate 97, glutamate 127, histidine 130, glutamate 192, glutamate 226, and histidine 229.

This sequence belongs to the TmoA/XamoA family. In terms of assembly, the propane 2-monooxygenase multicomponent enzyme system is composed of an electron transfer component and a monooxygenase component interacting with the effector protein MimD. The electron transfer component is composed of a reductase (MimB), and the monooxygenase component is formed by a large subunit (MimA) and a small subunit (MimC). Requires the presence of the chaperonin-like protein MimG to ensure a productive folding, resulting of a soluble MimA, which leads to the active form of MimABCD. It depends on Fe(2+) as a cofactor.

The catalysed reaction is propane + NADH + O2 + H(+) = propan-2-ol + NAD(+) + H2O. It carries out the reaction acetone + NADH + O2 + H(+) = hydroxyacetone + NAD(+) + H2O. The enzyme catalyses butan-2-one + NADH + O2 + H(+) = 1-hydroxy-2-butanone + NAD(+) + H2O. It catalyses the reaction phenol + NADH + O2 + H(+) = hydroquinone + NAD(+) + H2O. Its function is as follows. Component of the propane 2-monooxygenase multicomponent enzyme system which is involved in the degradation of propane via the O2-dependent hydroxylation of propane. Also involved in the degradation of acetone via the O2-dependent hydroxylation of acetone. Also able to catalyze the oxidation of phenol, methylethylketone (2-butanone), 1-propanol and 2-propanol. The polypeptide is Propane 2-monooxygenase, hydroxylase component large subunit (Mycolicibacterium goodii (Mycobacterium goodii)).